A 92-amino-acid polypeptide reads, in one-letter code: Large ribosomal subunit protein bL25 (92 aa).

Belongs to the bacterial ribosomal protein bL25 family. In terms of assembly, part of the 50S ribosomal subunit; part of the 5S rRNA/L5/L18/L25 subcomplex. Contacts the 5S rRNA. Binds to the 5S rRNA independently of L5 and L18.

This is one of the proteins that binds to the 5S RNA in the ribosome where it forms part of the central protuberance. This Vibrio campbellii (strain ATCC BAA-1116) protein is Large ribosomal subunit protein bL25.